Consider the following 710-residue polypeptide: Mitochondrial intermediate peptidase (710 aa).

A mitochondrion-targeting transit peptide spans 1 to 33; sequence MLLAAGTRYAYRLCGRRAAAALQGRAGRSCARS. The residue at position 124 (lysine 124) is an N6-acetyllysine. Histidine 492 is a binding site for Zn(2+). Residue glutamate 493 is part of the active site. Histidine 496 and histidine 499 together coordinate Zn(2+).

The protein belongs to the peptidase M3 family. Monomer. Zn(2+) serves as cofactor.

It is found in the mitochondrion matrix. The catalysed reaction is Release of an N-terminal octapeptide as second stage of processing of some proteins imported into the mitochondrion.. Its activity is regulated as follows. Activity is divalent cation-dependent. It is stimulated by manganese, magnesium or calcium ions and reversibly inhibited by zinc, cobalt and iron. Functionally, cleaves proteins, imported into the mitochondrion, to their mature size. In Rattus norvegicus (Rat), this protein is Mitochondrial intermediate peptidase (Mipep).